The sequence spans 223 residues: Deoxyribose-phosphate aldolase (223 aa).

D91 (proton donor/acceptor) is an active-site residue. Residue K153 is the Schiff-base intermediate with acetaldehyde of the active site. K182 serves as the catalytic Proton donor/acceptor.

This sequence belongs to the DeoC/FbaB aldolase family. DeoC type 1 subfamily.

Its subcellular location is the cytoplasm. The enzyme catalyses 2-deoxy-D-ribose 5-phosphate = D-glyceraldehyde 3-phosphate + acetaldehyde. The protein operates within carbohydrate degradation; 2-deoxy-D-ribose 1-phosphate degradation; D-glyceraldehyde 3-phosphate and acetaldehyde from 2-deoxy-alpha-D-ribose 1-phosphate: step 2/2. Catalyzes a reversible aldol reaction between acetaldehyde and D-glyceraldehyde 3-phosphate to generate 2-deoxy-D-ribose 5-phosphate. This chain is Deoxyribose-phosphate aldolase, found in Streptococcus pyogenes serotype M12 (strain MGAS2096).